Consider the following 286-residue polypeptide: Bifunctional protein FolD (286 aa).

Residues 163–165, Ile-188, and Ile-229 each bind NADP(+); that span reads GMS.

This sequence belongs to the tetrahydrofolate dehydrogenase/cyclohydrolase family. As to quaternary structure, homodimer.

The catalysed reaction is (6R)-5,10-methylene-5,6,7,8-tetrahydrofolate + NADP(+) = (6R)-5,10-methenyltetrahydrofolate + NADPH. It carries out the reaction (6R)-5,10-methenyltetrahydrofolate + H2O = (6R)-10-formyltetrahydrofolate + H(+). It functions in the pathway one-carbon metabolism; tetrahydrofolate interconversion. In terms of biological role, catalyzes the oxidation of 5,10-methylenetetrahydrofolate to 5,10-methenyltetrahydrofolate and then the hydrolysis of 5,10-methenyltetrahydrofolate to 10-formyltetrahydrofolate. This is Bifunctional protein FolD from Helicobacter hepaticus (strain ATCC 51449 / 3B1).